The primary structure comprises 194 residues: Ribosome maturation factor RimM (194 aa).

A PRC barrel domain is found at 113 to 194 (DGEYYWIDLI…RIVADWGLDY (82 aa)).

The protein belongs to the RimM family. Binds ribosomal protein uS19.

The protein localises to the cytoplasm. An accessory protein needed during the final step in the assembly of 30S ribosomal subunit, possibly for assembly of the head region. Essential for efficient processing of 16S rRNA. May be needed both before and after RbfA during the maturation of 16S rRNA. It has affinity for free ribosomal 30S subunits but not for 70S ribosomes. This is Ribosome maturation factor RimM from Leptothrix cholodnii (strain ATCC 51168 / LMG 8142 / SP-6) (Leptothrix discophora (strain SP-6)).